Here is a 244-residue protein sequence, read N- to C-terminus: Large ribosomal subunit protein uL3 (244 aa).

Residues 215–244 (KKPPRERRGFAGSSTVDPLKASKRAVAKKK) are disordered. A compositionally biased stretch (basic residues) spans 235 to 244 (ASKRAVAKKK).

It belongs to the universal ribosomal protein uL3 family. In terms of assembly, part of the 50S ribosomal subunit. Forms a cluster with proteins L14 and L19.

One of the primary rRNA binding proteins, it binds directly near the 3'-end of the 23S rRNA, where it nucleates assembly of the 50S subunit. This is Large ribosomal subunit protein uL3 from Koribacter versatilis (strain Ellin345).